We begin with the raw amino-acid sequence, 216 residues long: Thiopurine S-methyltransferase (216 aa).

S-adenosyl-L-methionine is bound by residues Trp11, Leu46, Glu67, and Arg122.

This sequence belongs to the class I-like SAM-binding methyltransferase superfamily. TPMT family.

Its subcellular location is the cytoplasm. It catalyses the reaction S-adenosyl-L-methionine + a thiopurine = S-adenosyl-L-homocysteine + a thiopurine S-methylether.. The protein is Thiopurine S-methyltransferase of Vibrio campbellii (strain ATCC BAA-1116).